The sequence spans 71 residues: Small ribosomal subunit protein bS21 (71 aa).

Belongs to the bacterial ribosomal protein bS21 family.

This chain is Small ribosomal subunit protein bS21, found in Blochmanniella floridana.